A 394-amino-acid chain; its full sequence is Elongation factor Tu 1 (394 aa).

The tr-type G domain maps to 10-204 (KPHVNVGTIG…ALDSYIPEPQ (195 aa)). Positions 19–26 (GHVDHGKT) are G1. 19 to 26 (GHVDHGKT) lines the GTP pocket. T26 provides a ligand contact to Mg(2+). Residues 60 to 64 (GITIS) form a G2 region. The tract at residues 81-84 (DCPG) is G3. Residues 81 to 85 (DCPGH) and 136 to 139 (NKCD) each bind GTP. Positions 136-139 (NKCD) are G4. The interval 174–176 (SAL) is G5.

The protein belongs to the TRAFAC class translation factor GTPase superfamily. Classic translation factor GTPase family. EF-Tu/EF-1A subfamily. As to quaternary structure, monomer.

It localises to the cytoplasm. It catalyses the reaction GTP + H2O = GDP + phosphate + H(+). In terms of biological role, GTP hydrolase that promotes the GTP-dependent binding of aminoacyl-tRNA to the A-site of ribosomes during protein biosynthesis. The protein is Elongation factor Tu 1 of Pseudoalteromonas translucida (strain TAC 125).